Reading from the N-terminus, the 623-residue chain is Chaperone protein DnaK (623 aa).

Residue Thr197 is modified to Phosphothreonine; by autocatalysis. Positions 595-615 are enriched in basic and acidic residues; it reads AENMYKKDEPNTANDKKKKDD. Residues 595–623 form a disordered region; sequence AENMYKKDEPNTANDKKKKDDDVIDAEVE.

This sequence belongs to the heat shock protein 70 family.

Acts as a chaperone. The polypeptide is Chaperone protein DnaK (Campylobacter jejuni subsp. jejuni serotype O:6 (strain 81116 / NCTC 11828)).